We begin with the raw amino-acid sequence, 293 residues long: Calcium uniporter protein 2, mitochondrial (293 aa).

A mitochondrion-targeting transit peptide spans 1-33 (MWSVMGLVRRTAMSSTVNKASPVRSLLGGFRCL). Residues 168 to 188 (ILWGGLGYSVVQIGIFVRLTF) form a helical membrane-spanning segment. Positions 193 to 201 (WDVMEPITF) match the Selectivity filter motif. Residue Glu-197 coordinates Ca(2+). A helical transmembrane segment spans residues 198–218 (PITFFTTATGIIVGYAYFLMT).

It belongs to the MCU (TC 1.A.77) family.

Its subcellular location is the mitochondrion inner membrane. It catalyses the reaction Ca(2+)(in) = Ca(2+)(out). Mitochondrial inner membrane calcium uniporter that mediates calcium uptake into mitochondria. Constitutes a pore-forming and calcium-conducting subunit. Mitochondrial calcium homeostasis plays key roles in cellular physiology and regulates cell bioenergetics, cytoplasmic calcium signals and activation of cell death pathways. The protein is Calcium uniporter protein 2, mitochondrial of Arabidopsis thaliana (Mouse-ear cress).